The following is a 768-amino-acid chain: Phosphoribosylformylglycinamidine synthase subunit PurL (768 aa).

Residue histidine 44 is part of the active site. ATP-binding residues include tyrosine 47 and lysine 86. Position 88 (glutamate 88) interacts with Mg(2+). Substrate contacts are provided by residues 89-92 and arginine 111; that span reads SHNH. Histidine 90 (proton acceptor) is an active-site residue. Aspartate 112 is a Mg(2+) binding site. Substrate is bound at residue glutamine 235. Residue aspartate 263 participates in Mg(2+) binding. Residue 307–309 participates in substrate binding; it reads ESQ. Positions 518 and 555 each coordinate ATP. Position 556 (asparagine 556) interacts with Mg(2+). Serine 558 is a substrate binding site.

Belongs to the FGAMS family. Monomer. Part of the FGAM synthase complex composed of 1 PurL, 1 PurQ and 2 PurS subunits.

It is found in the cytoplasm. It catalyses the reaction N(2)-formyl-N(1)-(5-phospho-beta-D-ribosyl)glycinamide + L-glutamine + ATP + H2O = 2-formamido-N(1)-(5-O-phospho-beta-D-ribosyl)acetamidine + L-glutamate + ADP + phosphate + H(+). It participates in purine metabolism; IMP biosynthesis via de novo pathway; 5-amino-1-(5-phospho-D-ribosyl)imidazole from N(2)-formyl-N(1)-(5-phospho-D-ribosyl)glycinamide: step 1/2. In terms of biological role, part of the phosphoribosylformylglycinamidine synthase complex involved in the purines biosynthetic pathway. Catalyzes the ATP-dependent conversion of formylglycinamide ribonucleotide (FGAR) and glutamine to yield formylglycinamidine ribonucleotide (FGAM) and glutamate. The FGAM synthase complex is composed of three subunits. PurQ produces an ammonia molecule by converting glutamine to glutamate. PurL transfers the ammonia molecule to FGAR to form FGAM in an ATP-dependent manner. PurS interacts with PurQ and PurL and is thought to assist in the transfer of the ammonia molecule from PurQ to PurL. The sequence is that of Phosphoribosylformylglycinamidine synthase subunit PurL from Synechococcus sp. (strain JA-2-3B'a(2-13)) (Cyanobacteria bacterium Yellowstone B-Prime).